The following is a 73-amino-acid chain: MDGLETTSKIKKKGWTVRHGEKGTENRLGPILVNHLCCYKKSKFTMTKQNVTASACCYRKASHYDKAKCNRKC.

This is an uncharacterized protein from Caprine arthritis encephalitis virus (CAEV).